Consider the following 154-residue polypeptide: Movement protein (154 aa).

Disordered regions lie at residues 83–103 (SSPT…HTRP) and 123–154 (WVAT…GRVR).

This sequence belongs to the luteoviruses movement protein family.

Its function is as follows. Transports viral genome to neighboring plant cells directly through plasmosdesmata, without any budding. The movement protein allows efficient cell to cell propagation, by bypassing the host cell wall barrier. In Barley yellow dwarf virus (isolate MAV) (BYDV), this protein is Movement protein.